Here is a 145-residue protein sequence, read N- to C-terminus: Superoxide dismutase [Cu-Zn] (145 aa).

The Cu cation site is built by histidine 37, histidine 39, and histidine 54. Cysteine 48 and cysteine 137 are oxidised to a cystine. 4 residues coordinate Zn(2+): histidine 54, histidine 62, histidine 71, and aspartate 74. A Cu cation-binding site is contributed by histidine 111.

It belongs to the Cu-Zn superoxide dismutase family. In terms of assembly, homodimer. Cu cation serves as cofactor. Zn(2+) is required as a cofactor.

It localises to the cytoplasm. The catalysed reaction is 2 superoxide + 2 H(+) = H2O2 + O2. Its function is as follows. Destroys radicals which are normally produced within the cells and which are toxic to biological systems. In Drosophila busckii (Fruit fly), this protein is Superoxide dismutase [Cu-Zn].